The following is a 258-amino-acid chain: Imidazole glycerol phosphate synthase subunit HisF (258 aa).

Residues Asp-11 and Asp-130 contribute to the active site.

It belongs to the HisA/HisF family. Heterodimer of HisH and HisF.

The protein localises to the cytoplasm. The enzyme catalyses 5-[(5-phospho-1-deoxy-D-ribulos-1-ylimino)methylamino]-1-(5-phospho-beta-D-ribosyl)imidazole-4-carboxamide + L-glutamine = D-erythro-1-(imidazol-4-yl)glycerol 3-phosphate + 5-amino-1-(5-phospho-beta-D-ribosyl)imidazole-4-carboxamide + L-glutamate + H(+). Its pathway is amino-acid biosynthesis; L-histidine biosynthesis; L-histidine from 5-phospho-alpha-D-ribose 1-diphosphate: step 5/9. In terms of biological role, IGPS catalyzes the conversion of PRFAR and glutamine to IGP, AICAR and glutamate. The HisF subunit catalyzes the cyclization activity that produces IGP and AICAR from PRFAR using the ammonia provided by the HisH subunit. This chain is Imidazole glycerol phosphate synthase subunit HisF, found in Magnetococcus marinus (strain ATCC BAA-1437 / JCM 17883 / MC-1).